A 369-amino-acid chain; its full sequence is MNDLEQLERQILEDIAAAVDEQGIEAVRVAALGKKGTVSEKLKTLGGMSPEERQMQGPAINGLKNRVTEALSERRTELRKAAVAARLEREKVDVTLPVRESAASRGRIHPISQVIDEITAIFADMGFSIAEGPDIETDYYNFTALNFPEGHPAREMHDTFFFNPDEKSERKLLRTHTSPVQVHTMEKFAAMRDKEGRDELIRIVIPGKTYRMDSDATHSPMFHQVEGLVVDKSANVANMKWVLEEFCKAFFEVPSVKMRMRPSFFPFTEPSVEVDIQCDRSGPHVKFGEGNDWLEILGCGMVHPNVLRMSGYDPEVYQGFAWGMGIDRIAMLKYGMPDLRAFFDADVRWIEHYGFRPLDIPTLFGGLSA.

Residue Glu269 coordinates Mg(2+).

Belongs to the class-II aminoacyl-tRNA synthetase family. Phe-tRNA synthetase alpha subunit type 1 subfamily. In terms of assembly, tetramer of two alpha and two beta subunits. It depends on Mg(2+) as a cofactor.

Its subcellular location is the cytoplasm. The enzyme catalyses tRNA(Phe) + L-phenylalanine + ATP = L-phenylalanyl-tRNA(Phe) + AMP + diphosphate + H(+). This chain is Phenylalanine--tRNA ligase alpha subunit, found in Brucella canis (strain ATCC 23365 / NCTC 10854 / RM-666).